The primary structure comprises 310 residues: Putative sugar kinase PH1459 (310 aa).

3 residues coordinate ATP: Lys-194, Thr-219, and Gly-224.

Belongs to the carbohydrate kinase PfkB family.

This Pyrococcus horikoshii (strain ATCC 700860 / DSM 12428 / JCM 9974 / NBRC 100139 / OT-3) protein is Putative sugar kinase PH1459.